Reading from the N-terminus, the 1144-residue chain is MACPWKFLFKVKSYQSDLKEEKDINNNVKKTPCAVLSPTIQDDPKSHQNGSPQLLTGTAQNVPESLDKLHVTSTRPQYVRIKNWGSGEILHDTLHHKATSDFTCKSKSCLGSIMNPKSLTRGPRDKPTPLEELLPHAIEFINQYYGSFKEAKIEEHLARLEAVTKEIETTGTYQLTLDELIFATKMAWRNAPRCIGRIQWSNLQVFDARNCSTAQEMFQHICRHILYATNNGNIRSAITVFPQRSDGKHDFRLWNSQLIRYAGYQMPDGTIRGDAATLEFTQLCIDLGWKPRYGRFDVLPLVLQADGQDPEVFEIPPDLVLEVTMEHPKYEWFQELGLKWYALPAVANMLLEVGGLEFPACPFNGWYMGTEIGVRDFCDTQRYNILEEVGRRMGLETHTLASLWKDRAVTEINVAVLHSFQKQNVTIMDHHTASESFMKHMQNEYRARGGCPADWIWLVPPVSGSITPVFHQEMLNYVLSPFYYYQIEPWKTHIWQNEKLRPRRREIRFRVLVKVVFFASMLMRKVMASRVRATVLFATETGKSEALARDLATLFSYAFNTKVVCMDQYKASTLEEEQLLLVVTSTFGNGDCPSNGQTLKKSLFMLRELNHTFRYAVFGLGSSMYPQFCAFAHDIDQKLSHLGASQLAPTGEGDELSGQEDAFRSWAVQTFRAACETFDVRSKHHIQIPKRFTSNATWEPQQYRLIQSPEPLDLNRALSSIHAKNVFTMRLKSQQNLQSEKSSRTTLLVQLTFEGSRGPSYLPGEHLGIFPGNQTALVQGILERVVDCPTPHQTVCLEVLDESGSYWVKDKRLPPCSLSQALTYFLDITTPPTQLQLHKLARFATDETDRQRLEALCQPSEYNDWKFSNNPTFLEVLEEFPSLHVPAAFLLSQLPILKPRYYSISSSQDHTPSEVHLTVAVVTYRTRDGQGPLHHGVCSTWIRNLKPQDPVPCFVRSVSGFQLPEDPSQPCILIGPGTGIAPFRSFWQQRLHDSQHKGLKGGRMSLVFGCRHPEEDHLYQEEMQEMVRKRVLFQVHTGYSRLPGKPKVYVQDILQKQLANEVLSVLHGEQGHLYICGDVRMARDVATTLKKLVATKLNLSEEQVEDYFFQLKSQKRYHEDIFGAVFSYGAKKGSALEEPKATRL.

A DINNN-motif; mediates interaction with SPSB1, SPSB2 and SPSB4 motif is present at residues 23-27; it reads DINNN. Residues 37 to 59 are disordered; the sequence is SPTIQDDPKSHQNGSPQLLTGTA. Residues 47–59 show a composition bias toward polar residues; sequence HQNGSPQLLTGTA. Zn(2+)-binding residues include cysteine 104 and cysteine 109. Serine 112 lines the (6R)-L-erythro-5,6,7,8-tetrahydrobiopterin pocket. Cysteine 194 contacts heme b. L-arginine contacts are provided by glutamine 257, tryptophan 366, tyrosine 367, and glutamate 371. 4 residues coordinate (6R)-L-erythro-5,6,7,8-tetrahydrobiopterin: arginine 375, isoleucine 456, tryptophan 457, and phenylalanine 470. Tyrosine 485 contacts heme b. Residues 509-529 are calmodulin-binding; the sequence is FRVLVKVVFFASMLMRKVMAS. In terms of domain architecture, Flavodoxin-like spans 533-671; that stretch reads ATVLFATETG…AFRSWAVQTF (139 aa). Threonine 539, glutamate 540, threonine 541, lysine 543, and serine 544 together coordinate FMN. At tyrosine 569 the chain carries Phosphotyrosine. FMN contacts are provided by serine 585, threonine 586, serine 622, cysteine 629, glutamate 655, and glutamine 659. In terms of domain architecture, FAD-binding FR-type spans 724–964; that stretch reads KNVFTMRLKS…VRSVSGFQLP (241 aa). Arginine 744 contacts NADP(+). FAD is bound by residues histidine 766, arginine 900, tyrosine 902, serine 903, threonine 918, and alanine 920. Threonine 923 serves as a coordination point for NADP(+). Residues tyrosine 924, valine 937, cysteine 938, and serine 939 each contribute to the FAD site. Threonine 978, arginine 1011, serine 1040, arginine 1041, lysine 1047, tyrosine 1049, glutamine 1051, and aspartate 1084 together coordinate NADP(+).

Belongs to the NOS family. In terms of assembly, homodimer. Interacts with NHERF1. Interacts with GAPDH. Interacts with S100A8 and S100A9 to form the iNOS-S100A8/9 transnitrosylase complex. Interacts with SPSB1, SPSB2 and SPSB4. Interacts with ELOC and CUL5 in the presence of SPSB1 or SPSB2 or SPSB4. Forms a complex with ASL, ASS1 and HSP90AA1; the complex regulates cell-autonomous L-arginine synthesis and citrulline recycling while channeling extracellular L-arginine to nitric oxide synthesis pathway. The cofactor is heme b. It depends on FAD as a cofactor. FMN serves as cofactor. (6R)-L-erythro-5,6,7,8-tetrahydrobiopterin is required as a cofactor. Post-translationally, polyubiquitinated; mediated by SPSB1, SPSB2 and SPSB4, leading to proteasomal degradation. Macrophages.

The protein localises to the cytoplasm. It is found in the cytosol. The enzyme catalyses 2 L-arginine + 3 NADPH + 4 O2 + H(+) = 2 L-citrulline + 2 nitric oxide + 3 NADP(+) + 4 H2O. With respect to regulation, not stimulated by calcium/calmodulin. Aspirin inhibits expression and function of this enzyme and effects may be exerted at the level of translational/post-translational modification and directly on the catalytic activity. Produces nitric oxide (NO) which is a messenger molecule with diverse functions throughout the body. In macrophages, NO mediates tumoricidal and bactericidal actions. Also has nitrosylase activity and mediates cysteine S-nitrosylation of cytoplasmic target proteins such PTGS2/COX2. As component of the iNOS-S100A8/9 transnitrosylase complex involved in the selective inflammatory stimulus-dependent S-nitrosylation of GAPDH implicated in regulation of the GAIT complex activity and probably multiple targets including ANXA5, EZR, MSN and VIM. Involved in inflammation, enhances the synthesis of pro-inflammatory mediators such as IL6 and IL8. The protein is Nitric oxide synthase, inducible (Nos2) of Mus musculus (Mouse).